Here is a 181-residue protein sequence, read N- to C-terminus: UPF0397 protein SUB0313 (181 aa).

Helical transmembrane passes span 11–31 (AIGIGAALFVIIGLFVPITIF), 45–65 (LFSVLFGPVAGFFIGFIGHML), 69–89 (FAGYGVWWSWVLPSGLVGLGI), 114–134 (VQALVNLISWAIVAPLGDILI), and 147–167 (LFAAFANTFTIGIGGTLLLIA).

The protein belongs to the UPF0397 family.

The protein localises to the cell membrane. This Streptococcus uberis (strain ATCC BAA-854 / 0140J) protein is UPF0397 protein SUB0313.